We begin with the raw amino-acid sequence, 196 residues long: Orotate phosphoribosyltransferase (196 aa).

Position 117-125 (117-125) interacts with 5-phospho-alpha-D-ribose 1-diphosphate; that stretch reads EDIVTTGLS. Thr-121 and Arg-149 together coordinate orotate.

It belongs to the purine/pyrimidine phosphoribosyltransferase family. PyrE subfamily. Homodimer. The cofactor is Mg(2+).

The catalysed reaction is orotidine 5'-phosphate + diphosphate = orotate + 5-phospho-alpha-D-ribose 1-diphosphate. The protein operates within pyrimidine metabolism; UMP biosynthesis via de novo pathway; UMP from orotate: step 1/2. In terms of biological role, catalyzes the transfer of a ribosyl phosphate group from 5-phosphoribose 1-diphosphate to orotate, leading to the formation of orotidine monophosphate (OMP). The chain is Orotate phosphoribosyltransferase from Methylorubrum extorquens (strain PA1) (Methylobacterium extorquens).